Here is a 488-residue protein sequence, read N- to C-terminus: Solanidine UDP-glucose glucosyltransferase 1 (488 aa).

The active-site Proton acceptor is His-23. His-23 contributes to the an anthocyanidin binding site. Asp-127 acts as the Charge relay in catalysis. UDP-alpha-D-glucose contacts are provided by Val-352, Gln-354, His-369, Asn-373, Ser-374, and Glu-377. Ala-392 contributes to the an anthocyanidin binding site. Residues Asp-393 and Gln-394 each contribute to the UDP-alpha-D-glucose site.

Belongs to the UDP-glycosyltransferase family. Expressed in the shoot apical meristem (SAM) and tuber.

The enzyme catalyses solasodine + UDP-alpha-D-glucose = solasodine 3-beta-D-glucoside + UDP + H(+). The catalysed reaction is solanidine + UDP-alpha-D-glucose = solanidine 3-O-beta-D-glucopyranoside + UDP + H(+). It carries out the reaction tomatidine + UDP-alpha-D-glucose = tomatidine 3-O-beta-D-glucopyranoside + UDP + H(+). Its function is as follows. Glucosyltransferase involved in the glucosylation of the steroidal alkaloid aglycons solanidine, solasodine and tomatidine to produce their corresponding glycoalkaloids. This Solanum tuberosum (Potato) protein is Solanidine UDP-glucose glucosyltransferase 1.